We begin with the raw amino-acid sequence, 445 residues long: Cytoplasmic tRNA 2-thiolation protein 2 (445 aa).

Positions 1–11 are enriched in acidic residues; that stretch reads MCSIGEDDFGD. A disordered region spans residues 1 to 26; sequence MCSIGEDDFGDEGGVHAMKEESPLPE. The segment covering 13 to 22 has biased composition (basic and acidic residues); sequence GGVHAMKEES.

It belongs to the CTU2/NCS2 family.

The protein localises to the cytoplasm. It participates in tRNA modification; 5-methoxycarbonylmethyl-2-thiouridine-tRNA biosynthesis. Functionally, plays a central role in 2-thiolation of mcm(5)S(2)U at tRNA wobble positions of tRNA(Lys), tRNA(Glu) and tRNA(Gln). May act by forming a heterodimer with NCS6/CTU1 that ligates sulfur from thiocarboxylated URM1 onto the uridine of tRNAs at wobble position. The polypeptide is Cytoplasmic tRNA 2-thiolation protein 2 (Aedes aegypti (Yellowfever mosquito)).